Here is a 68-residue protein sequence, read N- to C-terminus: Tetrahydromethanopterin S-methyltransferase subunit F (68 aa).

The chain crosses the membrane as a helical span at residues 45–65 (IAIGFLLAVLLVGVPAMMSIL).

It belongs to the MtrF family. In terms of assembly, the complex is composed of 8 subunits; MtrA, MtrB, MtrC, MtrD, MtrE, MtrF, MtrG and MtrH.

The protein resides in the cell membrane. The enzyme catalyses 5-methyl-5,6,7,8-tetrahydromethanopterin + coenzyme M + 2 Na(+)(in) = 5,6,7,8-tetrahydromethanopterin + methyl-coenzyme M + 2 Na(+)(out). The protein operates within one-carbon metabolism; methanogenesis from CO(2); methyl-coenzyme M from 5,10-methylene-5,6,7,8-tetrahydromethanopterin: step 2/2. Its function is as follows. Part of a complex that catalyzes the formation of methyl-coenzyme M and tetrahydromethanopterin from coenzyme M and methyl-tetrahydromethanopterin. This is an energy-conserving, sodium-ion translocating step. The chain is Tetrahydromethanopterin S-methyltransferase subunit F (mtrF) from Methanothermobacter marburgensis (strain ATCC BAA-927 / DSM 2133 / JCM 14651 / NBRC 100331 / OCM 82 / Marburg) (Methanobacterium thermoautotrophicum).